The following is a 331-amino-acid chain: UPF0329 protein ECU01_0080/ECU01_1530/ECU02_1560/ECU04_0090/ECU08_0010/ECU08_2090 (331 aa).

Over residues 305–320 (QRSEMEKRDREQDPER) the composition is skewed to basic and acidic residues. Positions 305–331 (QRSEMEKRDREQDPERRRLRARRVGSL) are disordered. The segment covering 321–331 (RRLRARRVGSL) has biased composition (basic residues).

This sequence belongs to the UPF0329 family.

The polypeptide is UPF0329 protein ECU01_0080/ECU01_1530/ECU02_1560/ECU04_0090/ECU08_0010/ECU08_2090 (Encephalitozoon cuniculi (strain GB-M1) (Microsporidian parasite)).